The primary structure comprises 1328 residues: ATP-dependent DNA helicase hus2/rqh1 (1328 aa).

2 stretches are compositionally biased toward low complexity: residues 217-236 (NNLPFPRLNNNNTNNNNDNN) and 244-254 (ASPTPSSVSSQ). The disordered stretch occupies residues 217–254 (NNLPFPRLNNNNTNNNNDNNAIEKRDSASPTPSSVSSQ). The Helicase ATP-binding domain occupies 528-707 (INGTLSGKDV…INTLRMENCL (180 aa)). 555–562 (AVIEGGAS) contributes to the ATP binding site. Residues 651–654 (DEAH) carry the DEAH box motif. Residues 728-876 (LYTELYRFIS…ETKERQRQML (149 aa)) enclose the Helicase C-terminal domain. The region spanning 1115-1195 (IDVMTRCLKD…QKFIDEKEQN (81 aa)) is the HRDC domain. Disordered stretches follow at residues 1224 to 1247 (EQGFSDDSDSVYEPSSPIEEGDEE) and 1260 to 1328 (NSQS…QNYR). The span at 1260 to 1269 (NSQSLTQTGS) shows a compositional bias: polar residues. Basic residues predominate over residues 1283–1300 (KSYRHKRGSTSYSRKRKY).

This sequence belongs to the helicase family. RecQ subfamily. As to quaternary structure, interacts with top3.

It is found in the nucleus. The enzyme catalyses Couples ATP hydrolysis with the unwinding of duplex DNA by translocating in the 3'-5' direction.. The catalysed reaction is ATP + H2O = ADP + phosphate + H(+). Its function is as follows. ATP-dependent 3'-5' DNA-helicase. Has a role in the repair of UV-induced DNA damage in G2 via recombination-mediated repair. Also has a role in the repair of infrared-induced double DNA strand breaks. The sequence is that of ATP-dependent DNA helicase hus2/rqh1 from Schizosaccharomyces pombe (strain 972 / ATCC 24843) (Fission yeast).